A 502-amino-acid polypeptide reads, in one-letter code: MRSPPGAVAALASVAAQLATAALVPRDAAAPTTAAMPLPFPAQVGIDDSNLATCANANWPPPSSPVGEVISAQLPDADLQAALGEVDPARIRAIVDKLVGFGTRHTLSTQTDPTRGIGAARDWIAEEMRGYAATAGGRMEVTVPGYVQGVASRISFPVKISNVVATLKGDKDPDRVYVVSGHYDSRVTDVMNYEADAPGANDDASGVALAMELARIFATRRPAATIVFTAVAGEEQGLYGSAFMAQTYRNASVNVEGVLNNDIIGSSTGSRGEKDPHTVRVFCQGGSPAGESKERAETRASIGGENDSPARELGRFIAEVGGNAFTDMKVALVYRLDRYLRGGDHRSFLDAGYGSAVRFTEPNEDFNHQHQDVRNATDGTVLGDLAEFVDYDYVARVAKVNLAAAWSLANAPPQVRNVTVDTSTLSNDSGLSWAKIAGAGAALVKGYEVVWRPTTASLWTHQLYVGDVASFRVPLTKDNVIFGVRSVGLNGYKSPATMPFPG.

An N-terminal signal peptide occupies residues 1–21 (MRSPPGAVAALASVAAQLATA). Zn(2+)-binding residues include His182, Asp202, and Glu235. N-linked (GlcNAc...) asparagine glycosylation is present at Asn250. Asp262 is a binding site for Zn(2+). The disordered stretch occupies residues 284–307 (QGGSPAGESKERAETRASIGGEND). 3 N-linked (GlcNAc...) asparagine glycosylation sites follow: Asn375, Asn417, and Asn427. The region spanning 414-502 (QVRNVTVDTS…KSPATMPFPG (89 aa)) is the Fibronectin type-III domain.

This sequence belongs to the peptidase M28 family. M28B subfamily. It depends on Zn(2+) as a cofactor.

It localises to the secreted. This chain is Probable zinc metalloprotease MGG_02107, found in Pyricularia oryzae (strain 70-15 / ATCC MYA-4617 / FGSC 8958) (Rice blast fungus).